A 769-amino-acid polypeptide reads, in one-letter code: Serine protease HtrA-like (769 aa).

A compositionally biased stretch (basic residues) spans 1 to 20 (MDIGKKHVIPKSQYRRKRRE). Disordered stretches follow at residues 1 to 287 (MDIG…DKDN) and 324 to 390 (EDKH…KGRA). 2 stretches are compositionally biased toward basic and acidic residues: residues 21 to 64 (FFHN…ERFK) and 71 to 108 (LEQR…DVSK). Residues 126-137 (YEQNSEATLSTK) show a composition bias toward polar residues. Residues 138–186 (STDKVESTEMRKLSSDKNKVGHEEQHVLSKPSEHDKETRIDSESSRTDS) are compositionally biased toward basic and acidic residues. The span at 247-262 (QQSQNEQTKTYTYGDS) shows a compositional bias: polar residues. Over residues 264 to 287 (QNDKSNHENDLSHHTPSISDDKDN) the composition is skewed to basic and acidic residues. Residues 331–347 (ADSSETVGYQSQSTASH) show a composition bias toward polar residues. The span at 348-364 (RSTEKRNISINDHDKLN) shows a compositional bias: basic and acidic residues. Over residues 365-390 (GQKTNTKTSANNNQKKATSKLNKGRA) the composition is skewed to polar residues. The helical transmembrane segment at 410–430 (LVILMGIIILIVILNAIFNNV) threads the bilayer. Catalysis depends on charge relay system residues histidine 504, aspartate 534, and serine 619. One can recognise a PDZ domain in the interval 680-733 (IASLNSFERQAVKLPGKVKNGVVVDQVDNNGLADQSGLKKGDVITELDGKLLED).

The protein belongs to the peptidase S1C family.

It localises to the cell membrane. In Staphylococcus aureus (strain N315), this protein is Serine protease HtrA-like.